A 224-amino-acid polypeptide reads, in one-letter code: Putative ribonuclease Z (224 aa).

D120 and H184 together coordinate Zn(2+).

This sequence belongs to the RNase Z family. In terms of assembly, homodimer. Zn(2+) serves as cofactor.

It catalyses the reaction Endonucleolytic cleavage of RNA, removing extra 3' nucleotides from tRNA precursor, generating 3' termini of tRNAs. A 3'-hydroxy group is left at the tRNA terminus and a 5'-phosphoryl group is left at the trailer molecule.. Functionally, zinc phosphodiesterase, which displays some tRNA 3'-processing endonuclease activity. Probably involved in tRNA maturation, by removing a 3'-trailer from precursor tRNA. The sequence is that of Putative ribonuclease Z (rnz) from Mycobacterium tuberculosis (strain CDC 1551 / Oshkosh).